A 226-amino-acid chain; its full sequence is Elongation factor 1-delta 2 (226 aa).

The segment at 82-131 (TACSVSPTADQKAPAADEEDDDDVDLFGEETEEEKKAAEERAAAVKASGK) is disordered. Residues 97–113 (ADEEDDDDVDLFGEETE) are compositionally biased toward acidic residues. Over residues 114-124 (EEKKAAEERAA) the composition is skewed to basic and acidic residues.

It belongs to the EF-1-beta/EF-1-delta family. In terms of assembly, EF-1 is composed of 4 subunits: alpha, beta (1B-alpha=beta'), delta (1B-beta), and gamma (1B-gamma).

Its function is as follows. EF-1-beta and EF-1-beta' stimulate the exchange of GDP bound to EF-1-alpha to GTP. The protein is Elongation factor 1-delta 2 of Oryza sativa subsp. japonica (Rice).